Here is a 507-residue protein sequence, read N- to C-terminus: CWF19-like protein DRN1 (507 aa).

Residue serine 242 is modified to Phosphoserine.

Belongs to the CWF19 family. As to quaternary structure, interacts with DBR1. Interacts with SYF1, a component of the NTC complex. Interacts with lariat-introns and lariat-intermediates.

It is found in the nucleus. It localises to the cytoplasm. Functionally, involved in branched RNA metabolism, modulating the turnover of lariat-intron pre-mRNAs by the lariat-debranching enzyme DBR1. Enhances the debranching activity of DBR1 in vitro. The sequence is that of CWF19-like protein DRN1 (DRN1) from Saccharomyces cerevisiae (strain ATCC 204508 / S288c) (Baker's yeast).